Reading from the N-terminus, the 152-residue chain is Transcriptional regulator MraZ (152 aa).

SpoVT-AbrB domains are found at residues 5–52 (ATLV…PLPA) and 81–124 (ASEC…DEQT).

This sequence belongs to the MraZ family. As to quaternary structure, forms oligomers.

The protein localises to the cytoplasm. It is found in the nucleoid. Its function is as follows. Negatively regulates its own expression and that of the subsequent genes in the proximal part of the division and cell wall (dcw) gene cluster. Acts by binding directly to DNA. May also regulate the expression of genes outside the dcw cluster. This chain is Transcriptional regulator MraZ, found in Sodalis glossinidius (strain morsitans).